A 309-amino-acid polypeptide reads, in one-letter code: Vacuolar membrane protein YOR292C (309 aa).

At 1–52 (MPLQLFGRDQIVVHYDNGNMSNDDQNHQSVLGSWTRRAAAALRTLMNKRIQR) the chain is on the vacuolar side. Residue N19 is glycosylated (N-linked (GlcNAc...) asparagine). A helical membrane pass occupies residues 53-73 (ITLTHWLLLVIWVTSLWKFTS). Residues 74-81 (HYRQLYAN) are Cytoplasmic-facing. Residues 82 to 102 (SAVFATLCTNILLFGISDILA) form a helical membrane-spanning segment. The Vacuolar segment spans residues 103–183 (QSIACFYSYH…KTDTFDFFRW (81 aa)). N-linked (GlcNAc...) asparagine glycosylation is present at N121. The helical transmembrane segment at 184 to 204 (GCFMFWGFFISFFQAPWYKFL) threads the bilayer. At 205–225 (NFFYTEDPTVVQVFERVLSDQ) the chain is on the cytoplasmic side. Residues 226-246 (LLYSPISLYCFFMFSNYVMEG) traverse the membrane as a helical segment. Residues 247–260 (GDKDTLGKKIQRLY) are Vacuolar-facing. Residues 261-281 (ISTLGCNYLVWPMVQFINFLI) traverse the membrane as a helical segment. Residues 282–309 (MPRDFQAPFSSSVGVVWNCFLSMRNASK) lie on the Cytoplasmic side of the membrane.

It belongs to the peroxisomal membrane protein PXMP2/4 family. In terms of processing, N-glycosylated.

Its subcellular location is the vacuole membrane. The polypeptide is Vacuolar membrane protein YOR292C (Saccharomyces cerevisiae (strain ATCC 204508 / S288c) (Baker's yeast)).